We begin with the raw amino-acid sequence, 295 residues long: Uridine and thymidine phosphorylase (295 aa).

Phosphate-binding positions include Arg81 and 125–128 (RLGT). Residues Gln203 and Arg205 each coordinate substrate.

The protein belongs to the PNP/UDP phosphorylase family. Expressed in hypodermis, pharynx, spermatheca and gonad.

The enzyme catalyses uridine + phosphate = alpha-D-ribose 1-phosphate + uracil. It catalyses the reaction thymidine + phosphate = 2-deoxy-alpha-D-ribose 1-phosphate + thymine. It carries out the reaction 2'-deoxyuridine + phosphate = 2-deoxy-alpha-D-ribose 1-phosphate + uracil. It functions in the pathway pyrimidine metabolism; UMP biosynthesis via salvage pathway; uracil from uridine (phosphorylase route): step 1/1. It participates in pyrimidine metabolism; dTMP biosynthesis via salvage pathway; dTMP from thymine: step 1/2. Its function is as follows. Catalyzes the reversible phosphorylytic cleavage of uridine and thymidine to uracil and ribose-phosphate or thymine and deoxyribose-1-phosphate. The produced molecules are then utilized as carbon and energy sources or in the rescue of pyrimidine bases for nucleotide synthesis. Required for normal lifespan. This Caenorhabditis elegans protein is Uridine and thymidine phosphorylase.